The chain runs to 28 residues: Trypsin inhibitor 2 (28 aa).

Disulfide bonds link Cys3–Cys20, Cys10–Cys22, and Cys16–Cys27.

This sequence belongs to the protease inhibitor I7 (squash-type serine protease inhibitor) family.

The protein resides in the secreted. Functionally, inhibits trypsin. The chain is Trypsin inhibitor 2 from Momordica charantia (Bitter gourd).